The sequence spans 240 residues: 2,3,4,5-tetrahydropyridine-2,6-dicarboxylate N-acetyltransferase (240 aa).

The protein belongs to the transferase hexapeptide repeat family. DapH subfamily.

It catalyses the reaction (S)-2,3,4,5-tetrahydrodipicolinate + acetyl-CoA + H2O = L-2-acetamido-6-oxoheptanedioate + CoA. It participates in amino-acid biosynthesis; L-lysine biosynthesis via DAP pathway; LL-2,6-diaminopimelate from (S)-tetrahydrodipicolinate (acetylase route): step 1/3. Its function is as follows. Catalyzes the transfer of an acetyl group from acetyl-CoA to tetrahydrodipicolinate. The polypeptide is 2,3,4,5-tetrahydropyridine-2,6-dicarboxylate N-acetyltransferase (Bacillus cereus (strain G9842)).